The following is a 375-amino-acid chain: Alanine racemase (375 aa).

Residue Lys40 is the Proton acceptor; specific for D-alanine of the active site. An N6-(pyridoxal phosphate)lysine modification is found at Lys40. Residue Arg140 participates in substrate binding. Tyr268 acts as the Proton acceptor; specific for L-alanine in catalysis. Met315 is a substrate binding site.

The protein belongs to the alanine racemase family. It depends on pyridoxal 5'-phosphate as a cofactor.

It catalyses the reaction L-alanine = D-alanine. Its pathway is amino-acid biosynthesis; D-alanine biosynthesis; D-alanine from L-alanine: step 1/1. In terms of biological role, catalyzes the interconversion of L-alanine and D-alanine. May also act on other amino acids. The polypeptide is Alanine racemase (alr) (Limosilactobacillus reuteri (strain DSM 20016) (Lactobacillus reuteri)).